The sequence spans 60 residues: Large ribosomal subunit protein uL30 (60 aa).

Belongs to the universal ribosomal protein uL30 family. Part of the 50S ribosomal subunit.

This chain is Large ribosomal subunit protein uL30, found in Burkholderia ambifaria (strain MC40-6).